The following is a 430-amino-acid chain: Citrate synthase (430 aa).

Catalysis depends on residues His305 and Asp363.

It belongs to the citrate synthase family. In terms of assembly, homohexamer.

The catalysed reaction is oxaloacetate + acetyl-CoA + H2O = citrate + CoA + H(+). Its pathway is carbohydrate metabolism; tricarboxylic acid cycle; isocitrate from oxaloacetate: step 1/2. Its activity is regulated as follows. Allosterically inhibited by NADH. This Coxiella burnetii (strain RSA 493 / Nine Mile phase I) protein is Citrate synthase (gltA).